We begin with the raw amino-acid sequence, 274 residues long: 2-dehydro-3-deoxyphosphooctonate aldolase (274 aa).

Belongs to the KdsA family.

The protein resides in the cytoplasm. The catalysed reaction is D-arabinose 5-phosphate + phosphoenolpyruvate + H2O = 3-deoxy-alpha-D-manno-2-octulosonate-8-phosphate + phosphate. It functions in the pathway carbohydrate biosynthesis; 3-deoxy-D-manno-octulosonate biosynthesis; 3-deoxy-D-manno-octulosonate from D-ribulose 5-phosphate: step 2/3. Its pathway is bacterial outer membrane biogenesis; lipopolysaccharide biosynthesis. This is 2-dehydro-3-deoxyphosphooctonate aldolase from Rickettsia conorii (strain ATCC VR-613 / Malish 7).